A 704-amino-acid chain; its full sequence is Polyribonucleotide nucleotidyltransferase (704 aa).

The Mg(2+) site is built by Asp-491 and Asp-497. Positions 558 to 617 (PNYAVIEINSDKIRDVIGKGGATIRQLTEDTGAVIDIDDNGTIRIFGENKAATKEAIRQI) constitute a KH domain. Residues 627–695 (GKVYKGTVAR…NRGRIKLTMK (69 aa)) form the S1 motif domain.

This sequence belongs to the polyribonucleotide nucleotidyltransferase family. In terms of assembly, component of the RNA degradosome, which is a multiprotein complex involved in RNA processing and mRNA degradation. It depends on Mg(2+) as a cofactor.

Its subcellular location is the cytoplasm. The enzyme catalyses RNA(n+1) + phosphate = RNA(n) + a ribonucleoside 5'-diphosphate. In terms of biological role, involved in mRNA degradation. Catalyzes the phosphorolysis of single-stranded polyribonucleotides processively in the 3'- to 5'-direction. In Psychrobacter sp. (strain PRwf-1), this protein is Polyribonucleotide nucleotidyltransferase.